The following is a 439-amino-acid chain: sn-glycerol-3-phosphate-binding periplasmic protein UgpB (439 aa).

An N-terminal signal peptide occupies residues M1–A25. Y67, E91, S146, S272, G309, Y348, and R399 together coordinate sn-glycerol 3-phosphate.

It belongs to the bacterial solute-binding protein 1 family. The complex is composed of two ATP-binding proteins (UgpC), two transmembrane proteins (UgpA and UgpE) and a solute-binding protein (UgpB).

The protein resides in the periplasm. Part of the ABC transporter complex UgpBAEC involved in sn-glycerol-3-phosphate (G3P) import. Binds G3P. The chain is sn-glycerol-3-phosphate-binding periplasmic protein UgpB (ugpB) from Yersinia pestis bv. Antiqua (strain Antiqua).